The following is a 242-amino-acid chain: Octanoyltransferase (242 aa).

Residues 31 to 206 (SQTTDEIWFL…LFLKNFGYNQ (176 aa)) enclose the BPL/LPL catalytic domain. Substrate contacts are provided by residues 70–77 (RGGQVTYH), 137–139 (SIG), and 150–152 (GLA). The Acyl-thioester intermediate role is filled by cysteine 168.

The protein belongs to the LipB family.

It is found in the cytoplasm. The enzyme catalyses octanoyl-[ACP] + L-lysyl-[protein] = N(6)-octanoyl-L-lysyl-[protein] + holo-[ACP] + H(+). Its pathway is protein modification; protein lipoylation via endogenous pathway; protein N(6)-(lipoyl)lysine from octanoyl-[acyl-carrier-protein]: step 1/2. Its function is as follows. Catalyzes the transfer of endogenously produced octanoic acid from octanoyl-acyl-carrier-protein onto the lipoyl domains of lipoate-dependent enzymes. Lipoyl-ACP can also act as a substrate although octanoyl-ACP is likely to be the physiological substrate. In Coxiella burnetii (strain CbuK_Q154) (Coxiella burnetii (strain Q154)), this protein is Octanoyltransferase.